The primary structure comprises 108 residues: Latartoxin-2c (108 aa).

Residues 1–19 (MKVLVITALCFILLQNVLG) form the signal peptide. A propeptide spans 20–42 (EDTYEDLQNYIENLINENQDEAR) (removed in mature form). A Processing quadruplet motif motif is present at residues 39–42 (DEAR). Cystine bridges form between C44-C61, C51-C72, C60-C84, and C74-C82. I107 is modified (isoleucine amide).

It belongs to the neurotoxin 19 (CSTX) family. 11 (latartoxin) subfamily. Post-translationally, contains 4 disulfide bonds. In terms of processing, cleavage of the propeptide depends on the processing quadruplet motif (XXXR, with at least one of X being E). In terms of tissue distribution, expressed by the venom gland.

It localises to the secreted. Its function is as follows. Insect toxin. This chain is Latartoxin-2c, found in Lachesana tarabaevi (Spider).